The chain runs to 551 residues: Tripartite motif-containing protein 5 (551 aa).

At Ala-2 the chain carries N-acetylalanine. The RING-type zinc-finger motif lies at 15 to 55 (CPICLELLTEPLSLDCGHSFCQACITANHKESRERSCPLCR). Ser-82 carries the phosphoserine modification. Residues 87–128 (QKVDRCARHGEKLLLFCQQHGNVICWLCERSEEHRGHRTSLV) form a B box-type zinc finger. The Zn(2+) site is built by Cys-92, His-95, Cys-114, and His-120. The stretch at 127-221 (LVEEVAQKYR…VQSENDMVLQ (95 aa)) forms a coiled coil. A required for interaction with GABARAP and for autophagy region spans residues 182–195 (FKQLRDILDCEESN). The B30.2/SPRY domain maps to 276 to 551 (PDLKGMLQVF…LPMTLCSPSS (276 aa)).

It belongs to the TRIM/RBCC family. Can form homodimers and homotrimers. In addition to lower-order dimerization, also exhibits a higher-order multimerization and both low- and high-order multimerizations are essential for its restriction activity. Interacts with BTBD1 and BTBD2. Interacts with PSMC4, PSMC5, PSMD7 and HSPA8/HSC70. Interacts (via B30.2/SPRY domain) with HSPA1A/B. Interacts with PSMC2, MAP3K7/TAK1, TAB2 and TAB3. Interacts with SQSTM1. Interacts with TRIM6 and TRIM34. Interacts with ULK1 (phosphorylated form), GABARAP, GABARAPL1, GABARAPL2, MAP1LC3A, MAP1LC3C and BECN1. In terms of processing, degraded in a proteasome-independent fashion in the absence of viral infection but in a proteasome-dependent fashion following exposure to restriction sensitive virus. Post-translationally, autoubiquitinated in a RING finger- and UBE2D2-dependent manner. Monoubiquitinated by TRIM21. Deubiquitinated by Yersinia YopJ. Ubiquitination may not lead to proteasomal degradation.

It localises to the cytoplasm. The protein resides in the nucleus. It catalyses the reaction S-ubiquitinyl-[E2 ubiquitin-conjugating enzyme]-L-cysteine + [acceptor protein]-L-lysine = [E2 ubiquitin-conjugating enzyme]-L-cysteine + N(6)-ubiquitinyl-[acceptor protein]-L-lysine.. It functions in the pathway protein modification; protein ubiquitination. Functionally, capsid-specific restriction factor that prevents infection from non-host-adapted retroviruses. Blocks viral replication early in the life cycle, after viral entry but before reverse transcription. In addition to acting as a capsid-specific restriction factor, also acts as a pattern recognition receptor that activates innate immune signaling in response to the retroviral capsid lattice. Binding to the viral capsid triggers its E3 ubiquitin ligase activity, and in concert with the heterodimeric ubiquitin conjugating enzyme complex UBE2V1-UBE2N (also known as UBC13-UEV1A complex) generates 'Lys-63'-linked polyubiquitin chains, which in turn are catalysts in the autophosphorylation of the MAP3K7/TAK1 complex (includes TAK1, TAB2, and TAB3). Activation of the MAP3K7/TAK1 complex by autophosphorylation results in the induction and expression of NF-kappa-B and MAPK-responsive inflammatory genes, thereby leading to an innate immune response in the infected cell. Plays a role in regulating autophagy through activation of autophagy regulator BECN1 by causing its dissociation from its inhibitors BCL2 and TAB2. The polypeptide is Tripartite motif-containing protein 5 (TRIM5) (Alouatta sara (Bolivian red howler monkey)).